A 279-amino-acid polypeptide reads, in one-letter code: DegV domain-containing protein lin1977 (279 aa).

One can recognise a DegV domain in the interval 4–278 (IKIITDSTAG…TGAFAFMYYT (275 aa)). Hexadecanoate-binding residues include Ser-62 and Ser-94.

Its function is as follows. May bind long-chain fatty acids, such as palmitate, and may play a role in lipid transport or fatty acid metabolism. The protein is DegV domain-containing protein lin1977 of Listeria innocua serovar 6a (strain ATCC BAA-680 / CLIP 11262).